The following is a 123-amino-acid chain: Holo-[acyl-carrier-protein] synthase (123 aa).

Mg(2+)-binding residues include D8 and E60.

This sequence belongs to the P-Pant transferase superfamily. AcpS family. The cofactor is Mg(2+).

It is found in the cytoplasm. The catalysed reaction is apo-[ACP] + CoA = holo-[ACP] + adenosine 3',5'-bisphosphate + H(+). Its function is as follows. Transfers the 4'-phosphopantetheine moiety from coenzyme A to a Ser of acyl-carrier-protein. In Ehrlichia chaffeensis (strain ATCC CRL-10679 / Arkansas), this protein is Holo-[acyl-carrier-protein] synthase.